The primary structure comprises 161 residues: Nucleotide-binding protein Gbem_0619 (161 aa).

Belongs to the YajQ family.

In terms of biological role, nucleotide-binding protein. This chain is Nucleotide-binding protein Gbem_0619, found in Citrifermentans bemidjiense (strain ATCC BAA-1014 / DSM 16622 / JCM 12645 / Bem) (Geobacter bemidjiensis).